The sequence spans 293 residues: Triacylglycerol lipase (293 aa).

Positions 10–206 constitute an AB hydrolase-1 domain; that stretch reads PILLVHGLFG…YYSWSGIIKG (197 aa). Residue L17 coordinates substrate. The active-site Nucleophile is the S83. Q84 contributes to the substrate binding site. Residue D217 participates in Ca(2+) binding. Active-site charge relay system residues include D238 and H260. Positions 262, 266, and 269 each coordinate Ca(2+).

It belongs to the AB hydrolase superfamily. Pseudomonas lipase family. The cofactor is Ca(2+).

Its subcellular location is the secreted. It catalyses the reaction a triacylglycerol + H2O = a diacylglycerol + a fatty acid + H(+). Functionally, catalyzes the hydrolysis of triacylglycerols, with the highest activity with tributyrin (C4), lower activity with tricaprylin (C8), and much lower activity with triacetin (C2), trilaurin (C12) and triolein (C18). The sequence is that of Triacylglycerol lipase (lips) from Pseudomonas fragi.